Reading from the N-terminus, the 369-residue chain is Glycolate oxidase 5 (369 aa).

One can recognise an FMN hydroxy acid dehydrogenase domain in the interval 1–360 (MGEITNVTEY…TRNHVITEAD (360 aa)). Glyoxylate is bound at residue Y25. FMN is bound by residues 78 to 80 (PSA), S107, 128 to 130 (QLY), and T156. Y130 contacts glyoxylate. R165 contacts glyoxylate. Residues K231 and S253 each contribute to the FMN site. The glyoxylate site is built by H255 and R258. The Proton acceptor role is filled by H255. Residues 286–290 (DGGVR) and 309–310 (GR) each bind FMN. The Microbody targeting signal motif lies at 367 to 369 (SRL).

This sequence belongs to the FMN-dependent alpha-hydroxy acid dehydrogenase family. In terms of assembly, homotetramer. It depends on FMN as a cofactor.

Its subcellular location is the peroxisome. The catalysed reaction is glycolate + O2 = glyoxylate + H2O2. The protein operates within photosynthesis; photorespiration; glycine from 2-phosphoglycolate: step 2/3. Functionally, catalyzes the oxidation of glycolate to glyoxylate, with a reduction of O2 to H2O2. Is a key enzyme in photorespiration in green plants. The polypeptide is Glycolate oxidase 5 (GLO5) (Oryza sativa subsp. japonica (Rice)).